The primary structure comprises 157 residues: SsrA-binding protein (157 aa).

Belongs to the SmpB family.

The protein resides in the cytoplasm. Functionally, required for rescue of stalled ribosomes mediated by trans-translation. Binds to transfer-messenger RNA (tmRNA), required for stable association of tmRNA with ribosomes. tmRNA and SmpB together mimic tRNA shape, replacing the anticodon stem-loop with SmpB. tmRNA is encoded by the ssrA gene; the 2 termini fold to resemble tRNA(Ala) and it encodes a 'tag peptide', a short internal open reading frame. During trans-translation Ala-aminoacylated tmRNA acts like a tRNA, entering the A-site of stalled ribosomes, displacing the stalled mRNA. The ribosome then switches to translate the ORF on the tmRNA; the nascent peptide is terminated with the 'tag peptide' encoded by the tmRNA and targeted for degradation. The ribosome is freed to recommence translation, which seems to be the essential function of trans-translation. This chain is SsrA-binding protein, found in Clostridium kluyveri (strain NBRC 12016).